The chain runs to 525 residues: GMP synthase [glutamine-hydrolyzing] (525 aa).

Residues 9–207 form the Glutamine amidotransferase type-1 domain; that stretch reads RILILDFGSQ…VLDICGCAAL (199 aa). The active-site Nucleophile is C86. Active-site residues include H181 and E183. The 193-residue stretch at 208-400 folds into the GMPS ATP-PPase domain; the sequence is WTPSNIVDDA…LGLPYDMVYR (193 aa). 235–241 is a binding site for ATP; the sequence is SGGVDSS.

In terms of assembly, homodimer.

The catalysed reaction is XMP + L-glutamine + ATP + H2O = GMP + L-glutamate + AMP + diphosphate + 2 H(+). The protein operates within purine metabolism; GMP biosynthesis; GMP from XMP (L-Gln route): step 1/1. In terms of biological role, catalyzes the synthesis of GMP from XMP. This is GMP synthase [glutamine-hydrolyzing] from Pseudomonas aeruginosa (strain LESB58).